Here is a 106-residue protein sequence, read N- to C-terminus: Thioredoxin-like protein YusE (106 aa).

Positions 1–101 (MKELQEHELD…LYELIKQKSS (101 aa)) constitute a Thioredoxin domain. The cysteines at positions 26 and 29 are disulfide-linked.

The chain is Thioredoxin-like protein YusE (yusE) from Bacillus subtilis (strain 168).